The primary structure comprises 408 residues: MRQRFVDSLDFWRYLFERFLADQGPKSAAALTYTALFAVVPIMTLIFVVLSVVPDFQGIGEQIQGFIFRNFVPSSGAVLQDYLRTFIEQARHLTWLGVGVLMVTALLMLMTVEHTFNTIWRVRRPRRGLSSFLLHWAILSLGPLLLGTGFALSTYITSLSLVSDPYALAGARMLLKVMPLLFSTAAFTLLYVAVPNTAVPLRHALLGGLFAAVLFEAAKGLFGLYVALFPTYQLIYGAFAAVPLFLLWMYLSWMIVLLGAELVCNLSASRRWRRNPLPRLLVLLGVLRVFHQSQQSGQAVRQPDLQRAGWALPDSVWDEMLDFLEREQLICRVSDGGWVLCRDLNRYSLESLLSRSPWPLPHLDQLPESLDEPWFPALRSALERLQRERAALFGDSLANWLQPPLSEP.

The next 6 helical transmembrane spans lie at 33-53 (YTALFAVVPIMTLIFVVLSVV), 92-112 (HLTWLGVGVLMVTALLMLMTV), 132-152 (FLLHWAILSLGPLLLGTGFAL), 174-194 (LLKVMPLLFSTAAFTLLYVAV), 209-229 (LFAAVLFEAAKGLFGLYVALF), and 238-258 (AFAAVPLFLLWMYLSWMIVLL).

This sequence belongs to the UPF0761 family.

The protein localises to the cell inner membrane. This Azotobacter vinelandii (strain DJ / ATCC BAA-1303) protein is UPF0761 membrane protein Avin_36810.